The following is a 194-amino-acid chain: Imidazoleglycerol-phosphate dehydratase (194 aa).

Belongs to the imidazoleglycerol-phosphate dehydratase family.

Its subcellular location is the cytoplasm. The catalysed reaction is D-erythro-1-(imidazol-4-yl)glycerol 3-phosphate = 3-(imidazol-4-yl)-2-oxopropyl phosphate + H2O. It participates in amino-acid biosynthesis; L-histidine biosynthesis; L-histidine from 5-phospho-alpha-D-ribose 1-diphosphate: step 6/9. This is Imidazoleglycerol-phosphate dehydratase from Chlorobaculum tepidum (strain ATCC 49652 / DSM 12025 / NBRC 103806 / TLS) (Chlorobium tepidum).